A 161-amino-acid chain; its full sequence is ATP synthase subunit b 1 (161 aa).

Residues 5 to 25 (AETWVAVAFVLMVALFIYFGA) form a helical membrane-spanning segment.

Belongs to the ATPase B chain family. As to quaternary structure, F-type ATPases have 2 components, F(1) - the catalytic core - and F(0) - the membrane proton channel. F(1) has five subunits: alpha(3), beta(3), gamma(1), delta(1), epsilon(1). F(0) has three main subunits: a(1), b(2) and c(10-14). The alpha and beta chains form an alternating ring which encloses part of the gamma chain. F(1) is attached to F(0) by a central stalk formed by the gamma and epsilon chains, while a peripheral stalk is formed by the delta and b chains.

It localises to the cell inner membrane. Its function is as follows. F(1)F(0) ATP synthase produces ATP from ADP in the presence of a proton or sodium gradient. F-type ATPases consist of two structural domains, F(1) containing the extramembraneous catalytic core and F(0) containing the membrane proton channel, linked together by a central stalk and a peripheral stalk. During catalysis, ATP synthesis in the catalytic domain of F(1) is coupled via a rotary mechanism of the central stalk subunits to proton translocation. Functionally, component of the F(0) channel, it forms part of the peripheral stalk, linking F(1) to F(0). The polypeptide is ATP synthase subunit b 1 (Afipia carboxidovorans (strain ATCC 49405 / DSM 1227 / KCTC 32145 / OM5) (Oligotropha carboxidovorans)).